Consider the following 138-residue polypeptide: Large ribosomal subunit protein uL16 (138 aa).

Residues 1–13 (MLQPKRRKYRKEQ) show a composition bias toward basic residues. Residues 1 to 24 (MLQPKRRKYRKEQKGRNTGKATRG) are disordered.

The protein belongs to the universal ribosomal protein uL16 family. In terms of assembly, part of the 50S ribosomal subunit.

Binds 23S rRNA and is also seen to make contacts with the A and possibly P site tRNAs. The chain is Large ribosomal subunit protein uL16 from Cupriavidus necator (strain ATCC 17699 / DSM 428 / KCTC 22496 / NCIMB 10442 / H16 / Stanier 337) (Ralstonia eutropha).